We begin with the raw amino-acid sequence, 602 residues long: Elongation factor 4 (602 aa).

The 183-residue stretch at 7 to 189 folds into the tr-type G domain; it reads KYIRNFCIIA…KIVDMIPCPE (183 aa). GTP is bound by residues 19–24 and 136–139; these read DHGKST and NKID.

Belongs to the TRAFAC class translation factor GTPase superfamily. Classic translation factor GTPase family. LepA subfamily.

It is found in the cell membrane. It catalyses the reaction GTP + H2O = GDP + phosphate + H(+). In terms of biological role, required for accurate and efficient protein synthesis under certain stress conditions. May act as a fidelity factor of the translation reaction, by catalyzing a one-codon backward translocation of tRNAs on improperly translocated ribosomes. Back-translocation proceeds from a post-translocation (POST) complex to a pre-translocation (PRE) complex, thus giving elongation factor G a second chance to translocate the tRNAs correctly. Binds to ribosomes in a GTP-dependent manner. The sequence is that of Elongation factor 4 from Ruminiclostridium cellulolyticum (strain ATCC 35319 / DSM 5812 / JCM 6584 / H10) (Clostridium cellulolyticum).